The primary structure comprises 710 residues: Denticleless protein homolog A (710 aa).

3 WD repeats span residues 47-89 (GMPV…MQRL), 96-135 (AHTNAVFDIAWVPGEHKLVTASGDQTAKLWDVMAGELIGE), and 138-178 (GHQC…KDGF). The short motif at 168 to 171 (WDTR) is the DDB1-binding motif element. The Nuclear localization signal motif lies at 197-204 (PSKMKKRK). 4 WD repeats span residues 215–254 (DSQQSVTVVIFQDEYTIISAGAVDGVVKIWDLRKNYSAYR), 270–309 (TRKLGYSSLVLDPTGTNLFASCTDDNVYMFNATGLKTDPV), 314–355 (GHQN…AAPV), and 359–398 (GHCQEVTSVAWCQSDFTKIATCSDDNTVRVWRLKRSCEDS). The DDB1-binding motif motif lies at 244–247 (WDLR). Disordered regions lie at residues 428–534 (GKPS…VSSA) and 652–698 (ALGH…PGSM). Over residues 430-450 (PSVMSSSSLTSSPTPASCAPS) the composition is skewed to low complexity. Polar residues-rich tracts occupy residues 504–516 (TPKSSTRTDTKTP) and 659–690 (SSPQNKASGSPSSRTSTTKKQQPRNAPNSPVS).

This sequence belongs to the WD repeat cdt2 family. Component of the DCX(DTL) E3 ubiquitin ligase complex, at least composed of cul4 (cul4a or cul4b), ddb1, dtl/cdt2 and rbx1.

The protein localises to the nucleus. The protein resides in the cytoplasm. It is found in the cytoskeleton. It localises to the microtubule organizing center. Its subcellular location is the centrosome. The protein localises to the chromosome. Its pathway is protein modification; protein ubiquitination. Substrate-specific adapter of a DCX (DDB1-CUL4-X-box) E3 ubiquitin-protein ligase complex required for cell cycle control, DNA damage response and translesion DNA synthesis. The DCX(DTL) complex, also named CRL4(CDT2) complex, mediates the polyubiquitination and subsequent degradation of CDT1, CDKN1A/p21(CIP1), KMT5A and SDE2. CDT1 degradation in response to DNA damage is necessary to ensure proper cell cycle regulation of DNA replication. CDKN1A/p21(CIP1) degradation during S phase or following UV irradiation is essential to control replication licensing. KMT5A degradation is also important for a proper regulation of mechanisms such as TGF-beta signaling, cell cycle progression, DNA repair and cell migration. Most substrates require their interaction with PCNA for their polyubiquitination: substrates interact with PCNA via their PIP-box, and those containing the 'K+4' motif in the PIP box, recruit the DCX(DTL) complex, leading to their degradation. In undamaged proliferating cells, the DCX(DTL) complex also promotes the 'Lys-164' monoubiquitination of PCNA, thereby being involved in PCNA-dependent translesion DNA synthesis. May play a role in the regulation of the circadian clock. In Xenopus laevis (African clawed frog), this protein is Denticleless protein homolog A (dtl-a).